Reading from the N-terminus, the 588-residue chain is Adenine deaminase (588 aa).

The protein belongs to the metallo-dependent hydrolases superfamily. Adenine deaminase family. As to quaternary structure, homodimer. It depends on Mn(2+) as a cofactor.

It carries out the reaction adenine + H2O + H(+) = hypoxanthine + NH4(+). The polypeptide is Adenine deaminase (Escherichia coli (strain SE11)).